The following is a 354-amino-acid chain: UDP-N-acetylglucosamine--N-acetylmuramyl-(pentapeptide) pyrophosphoryl-undecaprenol N-acetylglucosamine transferase (354 aa).

UDP-N-acetyl-alpha-D-glucosamine-binding positions include 15 to 17 (TGG), Asn127, Arg163, Ser191, Ile242, 261 to 266 (ALTVSE), and Gln286.

It belongs to the glycosyltransferase 28 family. MurG subfamily.

It is found in the cell inner membrane. It catalyses the reaction di-trans,octa-cis-undecaprenyl diphospho-N-acetyl-alpha-D-muramoyl-L-alanyl-D-glutamyl-meso-2,6-diaminopimeloyl-D-alanyl-D-alanine + UDP-N-acetyl-alpha-D-glucosamine = di-trans,octa-cis-undecaprenyl diphospho-[N-acetyl-alpha-D-glucosaminyl-(1-&gt;4)]-N-acetyl-alpha-D-muramoyl-L-alanyl-D-glutamyl-meso-2,6-diaminopimeloyl-D-alanyl-D-alanine + UDP + H(+). The protein operates within cell wall biogenesis; peptidoglycan biosynthesis. Its function is as follows. Cell wall formation. Catalyzes the transfer of a GlcNAc subunit on undecaprenyl-pyrophosphoryl-MurNAc-pentapeptide (lipid intermediate I) to form undecaprenyl-pyrophosphoryl-MurNAc-(pentapeptide)GlcNAc (lipid intermediate II). This Pasteurella multocida (strain Pm70) protein is UDP-N-acetylglucosamine--N-acetylmuramyl-(pentapeptide) pyrophosphoryl-undecaprenol N-acetylglucosamine transferase.